Here is a 240-residue protein sequence, read N- to C-terminus: Ribose-5-phosphate isomerase (240 aa).

Substrate-binding positions include 34–37 (SGST), 88–91 (DGAD), and 101–104 (KGGG). The active-site Proton acceptor is Glu-110. Position 128 (Lys-128) interacts with substrate.

Belongs to the ribose 5-phosphate isomerase family.

The protein localises to the cytoplasm. The enzyme catalyses aldehydo-D-ribose 5-phosphate = D-ribulose 5-phosphate. The protein operates within carbohydrate degradation; pentose phosphate pathway; D-ribose 5-phosphate from D-ribulose 5-phosphate (non-oxidative stage): step 1/1. Its function is as follows. Involved in the first step of the non-oxidative branch of the pentose phosphate pathway. It catalyzes the reversible conversion of ribose-5-phosphate to ribulose 5-phosphate. The sequence is that of Ribose-5-phosphate isomerase (RKI1) from Candida albicans (strain SC5314 / ATCC MYA-2876) (Yeast).